A 208-amino-acid chain; its full sequence is ATP-dependent dethiobiotin synthetase BioD (208 aa).

An ATP-binding site is contributed by 11 to 16 (EVGKTF). Mg(2+) is bound at residue T15. K31 is an active-site residue. A substrate-binding site is contributed by S35. Residues D42, 95–98 (ETSG), and 155–156 (NQ) contribute to the ATP site. Residues D42 and E95 each contribute to the Mg(2+) site.

Belongs to the dethiobiotin synthetase family. As to quaternary structure, homodimer. It depends on Mg(2+) as a cofactor.

It localises to the cytoplasm. The catalysed reaction is (7R,8S)-7,8-diammoniononanoate + CO2 + ATP = (4R,5S)-dethiobiotin + ADP + phosphate + 3 H(+). Its pathway is cofactor biosynthesis; biotin biosynthesis; biotin from 7,8-diaminononanoate: step 1/2. Its function is as follows. Catalyzes a mechanistically unusual reaction, the ATP-dependent insertion of CO2 between the N7 and N8 nitrogen atoms of 7,8-diaminopelargonic acid (DAPA, also called 7,8-diammoniononanoate) to form a ureido ring. The protein is ATP-dependent dethiobiotin synthetase BioD of Chlamydia felis (strain Fe/C-56) (Chlamydophila felis).